The following is a 436-amino-acid chain: Adenosylhomocysteinase (436 aa).

Substrate contacts are provided by Thr62, Asp136, and Glu161. Position 162-164 (162-164 (TTT)) interacts with NAD(+). Substrate is bound by residues Lys191 and Asp195. Residues Asn196, 225-230 (GFGDVG), Glu248, Asn283, 304-306 (IGH), and Asn352 contribute to the NAD(+) site.

Belongs to the adenosylhomocysteinase family. NAD(+) serves as cofactor.

Its subcellular location is the cytoplasm. It catalyses the reaction S-adenosyl-L-homocysteine + H2O = L-homocysteine + adenosine. The protein operates within amino-acid biosynthesis; L-homocysteine biosynthesis; L-homocysteine from S-adenosyl-L-homocysteine: step 1/1. May play a key role in the regulation of the intracellular concentration of adenosylhomocysteine. This chain is Adenosylhomocysteinase, found in Leptospira borgpetersenii serovar Hardjo-bovis (strain JB197).